The primary structure comprises 221 residues: Ribosomal RNA small subunit methyltransferase Nep1 (221 aa).

S-adenosyl-L-methionine contacts are provided by residues Gly-174, Gly-179, and 196–201 (LGEVAM).

It belongs to the class IV-like SAM-binding methyltransferase superfamily. RNA methyltransferase NEP1 family. As to quaternary structure, homodimer.

It carries out the reaction a pseudouridine in rRNA + S-adenosyl-L-methionine = an N(1)-methylpseudouridine in rRNA + S-adenosyl-L-homocysteine + H(+). Methyltransferase involved in ribosomal biogenesis. Specifically catalyzes the N1-methylation of the pseudouridine corresponding to position 914 in M.jannaschii 16S rRNA. The chain is Ribosomal RNA small subunit methyltransferase Nep1 from Pyrobaculum arsenaticum (strain DSM 13514 / JCM 11321 / PZ6).